A 156-amino-acid polypeptide reads, in one-letter code: Small ribosomal subunit protein uS7 (156 aa).

Belongs to the universal ribosomal protein uS7 family. As to quaternary structure, part of the 30S ribosomal subunit. Contacts proteins S9 and S11.

Functionally, one of the primary rRNA binding proteins, it binds directly to 16S rRNA where it nucleates assembly of the head domain of the 30S subunit. Is located at the subunit interface close to the decoding center, probably blocks exit of the E-site tRNA. The sequence is that of Small ribosomal subunit protein uS7 from Rhizobium leguminosarum bv. trifolii (strain WSM2304).